The primary structure comprises 364 residues: Uroporphyrinogen decarboxylase (364 aa).

Substrate is bound by residues R28–R32, D78, Y160, T215, and H333.

The protein belongs to the uroporphyrinogen decarboxylase family. Homodimer.

It is found in the cytoplasm. The catalysed reaction is uroporphyrinogen III + 4 H(+) = coproporphyrinogen III + 4 CO2. The protein operates within porphyrin-containing compound metabolism; protoporphyrin-IX biosynthesis; coproporphyrinogen-III from 5-aminolevulinate: step 4/4. Catalyzes the decarboxylation of four acetate groups of uroporphyrinogen-III to yield coproporphyrinogen-III. The chain is Uroporphyrinogen decarboxylase from Burkholderia pseudomallei (strain 668).